We begin with the raw amino-acid sequence, 90 residues long: DNA-binding protein HU (90 aa).

The protein belongs to the bacterial histone-like protein family. Homodimer.

Its function is as follows. Histone-like DNA-binding protein which is capable of wrapping DNA to stabilize it, and thus to prevent its denaturation under extreme environmental conditions. The chain is DNA-binding protein HU (hup) from Haemophilus influenzae (strain ATCC 51907 / DSM 11121 / KW20 / Rd).